The following is a 250-amino-acid chain: MMPDHGELLYEGKAKRVFASTDPDRVLVEFKNDATAFNAQKKAQLDGKGRLNCQISARLFDLLEREGVPTHYCGLAGETWMLVRRVRIIPLEVVLRNIATGSLCRQTPIAEGTAIEPALLDLYYKDDSLGDPLLTEARVQLLGVADTAQLSAIEQLARRVNAVLLPFFDELDLQLVDFKLELGLASDGTLLLADEISPDTCRLWDRRNSNAEDRILDKDRFRKDLGGVMEAYGEVLKRVQGNCPNPRNCL.

Belongs to the SAICAR synthetase family.

The catalysed reaction is 5-amino-1-(5-phospho-D-ribosyl)imidazole-4-carboxylate + L-aspartate + ATP = (2S)-2-[5-amino-1-(5-phospho-beta-D-ribosyl)imidazole-4-carboxamido]succinate + ADP + phosphate + 2 H(+). The protein operates within purine metabolism; IMP biosynthesis via de novo pathway; 5-amino-1-(5-phospho-D-ribosyl)imidazole-4-carboxamide from 5-amino-1-(5-phospho-D-ribosyl)imidazole-4-carboxylate: step 1/2. The sequence is that of Phosphoribosylaminoimidazole-succinocarboxamide synthase from Synechococcus sp. (strain CC9605).